Here is a 249-residue protein sequence, read N- to C-terminus: T-cell immunoreceptor with Ig and ITIM domains (249 aa).

Residues 1 to 28 form the signal peptide; that stretch reads MHGWLLLVWVQGLIQAAFLATAIGATAG. The 99-residue stretch at 29 to 127 folds into the Ig-like V-type domain; sequence TIDTKRNISA…GGIYKGRIFL (99 aa). Residues 29–148 are Extracellular-facing; that stretch reads TIDTKRNISA…LAQFQTAPLG (120 aa). Residues 35–45 form a homodimerization region; it reads NISAEEGGSVI. Cysteines 48 and 111 form a disulfide. Residue Asn104 is glycosylated (N-linked (GlcNAc...) asparagine). A helical transmembrane segment spans residues 149–169; sequence GTMAAVLGLICLMVTGVTVLA. At 170–249 the chain is on the cytoplasmic side; it reads RKDKSIRMHS…ESFIAVSKTG (80 aa). The interval 182–222 is disordered; sequence SGLGRTEAEPQEWNLRSLSSPGSPVQTQTAPAGPCGEQAED. The span at 195–211 shows a compositional bias: polar residues; it reads NLRSLSSPGSPVQTQTA. Positions 234–239 match the ITIM motif motif; the sequence is LSYRSL.

As to quaternary structure, homodimer in cis; binds with high affinity to PVR, forming a heterotetrameric assembly of two TIGIT and two PVR molecules. Binds with lower affinity to NECTIN2 and NECTIN3. Interacts with GRB2. Interacts with NECTIN4.

Its subcellular location is the cell membrane. Inhibitory receptor that plays a role in the modulation of immune responses. Suppresses T-cell activation by promoting the generation of mature immunoregulatory dendritic cells. Upon binding to its ligands PVR/CD155 or NECTIN2/CD112, which are expressed on antigen-presenting cells, sends inhibitory signals to the T-cell or NK cell. Mechanistically, interaction with ligand leads to phosphorylation of the cytoplasmic tail by Src family tyrosine kinases such as FYN or LCK, allowing subsequent binding to adapter GRB2 and SHIP1/INPP5D. In turn, inhibits PI3K and MAPK signaling cascades. In addition, associates with beta-arrestin-2/ARRB2 to recruit SHIP1/INPP5D that suppresses autoubiquitination of TRAF6 and subsequently inhibits NF-kappa-B signaling pathway. Also acts as a receptor for NECTIN4 to inhibit NK cell cytotoxicity. This is T-cell immunoreceptor with Ig and ITIM domains from Mus musculus (Mouse).